A 326-amino-acid chain; its full sequence is MATH domain and coiled-coil domain-containing protein At3g58370 (326 aa).

One can recognise an MATH domain in the interval 7–133; the sequence is DNKFTWVIKN…NGEVKIVVEI (127 aa). Positions 259–312 form a coiled coil; that stretch reads LRLDWLEKKLAEVKAKKKKVETGKARLQRAEEELQKLNQKCLELKAFLEKENAD.

In Arabidopsis thaliana (Mouse-ear cress), this protein is MATH domain and coiled-coil domain-containing protein At3g58370.